We begin with the raw amino-acid sequence, 253 residues long: Ubiquinone/menaquinone biosynthesis C-methyltransferase UbiE (253 aa).

S-adenosyl-L-methionine is bound by residues Thr-76, Asp-97, and Asn-125–Ala-126.

It belongs to the class I-like SAM-binding methyltransferase superfamily. MenG/UbiE family.

The catalysed reaction is a 2-demethylmenaquinol + S-adenosyl-L-methionine = a menaquinol + S-adenosyl-L-homocysteine + H(+). The enzyme catalyses a 2-methoxy-6-(all-trans-polyprenyl)benzene-1,4-diol + S-adenosyl-L-methionine = a 5-methoxy-2-methyl-3-(all-trans-polyprenyl)benzene-1,4-diol + S-adenosyl-L-homocysteine + H(+). The protein operates within quinol/quinone metabolism; menaquinone biosynthesis; menaquinol from 1,4-dihydroxy-2-naphthoate: step 2/2. Its pathway is cofactor biosynthesis; ubiquinone biosynthesis. Methyltransferase required for the conversion of demethylmenaquinol (DMKH2) to menaquinol (MKH2) and the conversion of 2-polyprenyl-6-methoxy-1,4-benzoquinol (DDMQH2) to 2-polyprenyl-3-methyl-6-methoxy-1,4-benzoquinol (DMQH2). The sequence is that of Ubiquinone/menaquinone biosynthesis C-methyltransferase UbiE from Stenotrophomonas maltophilia (strain K279a).